The sequence spans 596 residues: Succinate dehydrogenase flavoprotein subunit (596 aa).

FAD-binding positions include 18–23, 41–56, and D225; these read GAGGAG and TKLF…AQGG. Tele-8alpha-FAD histidine is present on H49. Residues H246 and T258 each contribute to the substrate site. The active-site Proton acceptor is R290. H357 contributes to the substrate binding site. E391 provides a ligand contact to FAD. Residue R402 coordinates substrate. 407–408 provides a ligand contact to FAD; the sequence is SL.

This sequence belongs to the FAD-dependent oxidoreductase 2 family. FRD/SDH subfamily. In terms of assembly, part of an enzyme complex containing four subunits: a flavoprotein, an iron-sulfur, cytochrome b-556, and a hydrophobic anchor protein. Requires FAD as cofactor.

The protein resides in the cell inner membrane. The enzyme catalyses a quinone + succinate = fumarate + a quinol. Its pathway is carbohydrate metabolism; tricarboxylic acid cycle; fumarate from succinate (bacterial route): step 1/1. The chain is Succinate dehydrogenase flavoprotein subunit (sdhA) from Rickettsia felis (strain ATCC VR-1525 / URRWXCal2) (Rickettsia azadi).